A 65-amino-acid chain; its full sequence is Large ribosomal subunit protein bL35 (65 aa).

Belongs to the bacterial ribosomal protein bL35 family.

The chain is Large ribosomal subunit protein bL35 from Clostridium botulinum (strain Loch Maree / Type A3).